The chain runs to 350 residues: NADH-quinone oxidoreductase subunit H (350 aa).

A run of 8 helical transmembrane segments spans residues 5–25, 76–96, 118–138, 162–182, 190–210, 243–263, 284–304, and 319–339; these read FIIE…IMAM, FLFV…SAVI, IALL…MIGG, IAMG…SLKV, MNWN…CSFA, LFAE…LFFG, LLGI…YMWV, and LGWR…GAVI.

The protein belongs to the complex I subunit 1 family. In terms of assembly, NDH-1 is composed of 14 different subunits. Subunits NuoA, H, J, K, L, M, N constitute the membrane sector of the complex.

Its subcellular location is the cell inner membrane. It catalyses the reaction a quinone + NADH + 5 H(+)(in) = a quinol + NAD(+) + 4 H(+)(out). In terms of biological role, NDH-1 shuttles electrons from NADH, via FMN and iron-sulfur (Fe-S) centers, to quinones in the respiratory chain. The immediate electron acceptor for the enzyme in this species is believed to be ubiquinone. Couples the redox reaction to proton translocation (for every two electrons transferred, four hydrogen ions are translocated across the cytoplasmic membrane), and thus conserves the redox energy in a proton gradient. This subunit may bind ubiquinone. This is NADH-quinone oxidoreductase subunit H from Flavobacterium johnsoniae (strain ATCC 17061 / DSM 2064 / JCM 8514 / BCRC 14874 / CCUG 350202 / NBRC 14942 / NCIMB 11054 / UW101) (Cytophaga johnsonae).